The following is a 336-amino-acid chain: tRNA N6-adenosine threonylcarbamoyltransferase (336 aa).

2 residues coordinate Fe cation: His-114 and His-118. Substrate contacts are provided by residues 136–140, Asp-169, Gly-182, Asp-186, and Asn-275; that span reads LVSGG. Residue Asp-302 coordinates Fe cation.

This sequence belongs to the KAE1 / TsaD family. Fe(2+) is required as a cofactor.

It localises to the cytoplasm. The catalysed reaction is L-threonylcarbamoyladenylate + adenosine(37) in tRNA = N(6)-L-threonylcarbamoyladenosine(37) in tRNA + AMP + H(+). In terms of biological role, required for the formation of a threonylcarbamoyl group on adenosine at position 37 (t(6)A37) in tRNAs that read codons beginning with adenine. Is involved in the transfer of the threonylcarbamoyl moiety of threonylcarbamoyl-AMP (TC-AMP) to the N6 group of A37, together with TsaE and TsaB. TsaD likely plays a direct catalytic role in this reaction. In Streptococcus agalactiae serotype V (strain ATCC BAA-611 / 2603 V/R), this protein is tRNA N6-adenosine threonylcarbamoyltransferase.